We begin with the raw amino-acid sequence, 131 residues long: D-ribose pyranase (131 aa).

His20 (proton donor) is an active-site residue. Substrate contacts are provided by residues Asp28, His98, and Phe120–Asn122.

It belongs to the RbsD / FucU family. RbsD subfamily. As to quaternary structure, homodecamer.

It localises to the cytoplasm. The enzyme catalyses beta-D-ribopyranose = beta-D-ribofuranose. The protein operates within carbohydrate metabolism; D-ribose degradation; D-ribose 5-phosphate from beta-D-ribopyranose: step 1/2. Its function is as follows. Catalyzes the interconversion of beta-pyran and beta-furan forms of D-ribose. The chain is D-ribose pyranase from Oenococcus oeni (strain ATCC BAA-331 / PSU-1).